Reading from the N-terminus, the 351-residue chain is O-methyltransferase apf6 (351 aa).

S-adenosyl-L-methionine-binding positions include 231–232 (GG), 279–280 (NF), and Arg-295. His-299 functions as the Proton acceptor in the catalytic mechanism.

This sequence belongs to the class I-like SAM-binding methyltransferase superfamily. Cation-independent O-methyltransferase family.

Its pathway is secondary metabolite biosynthesis. Functionally, O-methyltransferase; part of the gene cluster that mediates the biosynthesis of the cyclic tetrapeptide apicidin F (APF). The non-ribosomal peptide synthetase apf1 incorporates four different amino acids to produce apicidin F: L-phenylalanine, D-pipecolic acid (D-pip), N-methoxy-L-tryptophan and L-2-aminooctanedioic acid. L-Phenylalanine is the only proteinogenic amino acid directly used by apf1. The 3 other apf1 substrates are non-proteinogenic and have to be modified by other enzymes of the cluster. Lysine is converted to delta-1-pyrroline-5-carboxylate (P5C) which is reduced to L-pipecolic acid (L-pip) by apf3. L-pip is epimerized to D-pip, probably by apf1 activity, prior to incorporation. L-Tryptophan is N-oxidyzed by one of the cytochrome P450 monooxygenases (apf7 or apf8), and further methylated at the hydroxy group by the O-methyltransferase apf6 to yield N-methoxy-L-tryptophan. The synthesis of the fourth apf1 substrate is more complex. The fatty acid synthase apf5 is involved in the synthesis of the octanoic acid backbone of L-2-aminooctanedioic acid by fixing one acetyl-CoA unit and three malonyl-CoA units. Then one of the cytochrome P450 monooxygenases (apf7 or apf8) may oxidize this backbone to 2-oxooctanoic acid. The aminotransferase apf4 is predicted to catalyze the exchange of the keto group with an amino group. The next step would be the oxidation of 2-aminooctanoic acid by one of the cytochrome P450 monooxygenases (apf7 or apf8). The last step is the oxidation of 2-amino-8-hydroxyoctanoic acid to 2-aminooctanedioic acid is catalyzed by the FAD-dependent monooxygenase apf9. This is O-methyltransferase apf6 from Gibberella fujikuroi (strain CBS 195.34 / IMI 58289 / NRRL A-6831) (Bakanae and foot rot disease fungus).